The sequence spans 107 residues: Nucleoid-associated protein A1G_07310 (107 aa).

This sequence belongs to the YbaB/EbfC family. Homodimer.

It is found in the cytoplasm. Its subcellular location is the nucleoid. Binds to DNA and alters its conformation. May be involved in regulation of gene expression, nucleoid organization and DNA protection. The sequence is that of Nucleoid-associated protein A1G_07310 from Rickettsia rickettsii (strain Sheila Smith).